A 426-amino-acid chain; its full sequence is Serine/threonine-protein kinase ssn3 (426 aa).

The Protein kinase domain occupies 41 to 368 (YHIVGFISSG…AREALEHPYF (328 aa)). ATP-binding positions include 47-55 (ISSGTYGRV) and K71. D173 acts as the Proton acceptor in catalysis. The interval 390-426 (RVTQDDNDIRSGSLPGTKRSGLPDDSLMGRAAKRLKE) is disordered.

This sequence belongs to the protein kinase superfamily. CMGC Ser/Thr protein kinase family. CDC2/CDKX subfamily. As to quaternary structure, component of the srb8-11 complex, a regulatory module of the Mediator complex. Mg(2+) is required as a cofactor.

It is found in the nucleus. It catalyses the reaction L-seryl-[protein] + ATP = O-phospho-L-seryl-[protein] + ADP + H(+). The enzyme catalyses L-threonyl-[protein] + ATP = O-phospho-L-threonyl-[protein] + ADP + H(+). The catalysed reaction is [DNA-directed RNA polymerase] + ATP = phospho-[DNA-directed RNA polymerase] + ADP + H(+). Functionally, component of the srb8-11 complex. The srb8-11 complex is a regulatory module of the Mediator complex which is itself dependent transcription. The srb8-11 complex may be involved in the transcriptional repression of a subset of genes regulated by Mediator. It may inhibit the association of the Mediator complex with RNA polymerase II to form the holoenzyme complex. The srb8-11 complex phosphorylates the C-terminal domain (CTD) of the largest subunit of RNA polymerase II. The sequence is that of Serine/threonine-protein kinase ssn3 (ssn3) from Neosartorya fischeri (strain ATCC 1020 / DSM 3700 / CBS 544.65 / FGSC A1164 / JCM 1740 / NRRL 181 / WB 181) (Aspergillus fischerianus).